Reading from the N-terminus, the 623-residue chain is Chaperone protein HtpG (623 aa).

The segment at 1–336 (MSETNTQKAA…TEDLPLNVSR (336 aa)) is a; substrate-binding. The tract at residues 337-546 (EMLQATPVLA…DGGPDLTMQR (210 aa)) is b. Residues 547–623 (LMRRSGQAMP…ATLLAGPAAE (77 aa)) form a c region.

The protein belongs to the heat shock protein 90 family. As to quaternary structure, homodimer.

Its subcellular location is the cytoplasm. Functionally, molecular chaperone. Has ATPase activity. The polypeptide is Chaperone protein HtpG (Gluconobacter oxydans (strain 621H) (Gluconobacter suboxydans)).